The following is a 150-amino-acid chain: UPF0756 membrane protein ABAYE1440 (150 aa).

Transmembrane regions (helical) follow at residues 1 to 21, 45 to 65, 83 to 103, and 115 to 135; these read MLAQ…CGLL, FFPY…TIGV, FISF…WLGG, and VVAG…GVPV.

It belongs to the UPF0756 family.

The protein resides in the cell membrane. The sequence is that of UPF0756 membrane protein ABAYE1440 from Acinetobacter baumannii (strain AYE).